Consider the following 119-residue polypeptide: MSRVKRGVTAHAKHKKVFKAAKGYYGRRKNTIRTAKQAVEKAGQYAFRDRKRKKRTFRALWIQRLNAAVRPFELTYSRFIDGLSKSGITVDRKVLSDLAINEPAAFQAIVEKAKAALAA.

This sequence belongs to the bacterial ribosomal protein bL20 family.

Binds directly to 23S ribosomal RNA and is necessary for the in vitro assembly process of the 50S ribosomal subunit. It is not involved in the protein synthesizing functions of that subunit. This is Large ribosomal subunit protein bL20 from Bradyrhizobium sp. (strain BTAi1 / ATCC BAA-1182).